The sequence spans 143 residues: Large ribosomal subunit protein uL13 (143 aa).

This sequence belongs to the universal ribosomal protein uL13 family. Part of the 50S ribosomal subunit.

Its function is as follows. This protein is one of the early assembly proteins of the 50S ribosomal subunit, although it is not seen to bind rRNA by itself. It is important during the early stages of 50S assembly. This chain is Large ribosomal subunit protein uL13, found in Alkaliphilus oremlandii (strain OhILAs) (Clostridium oremlandii (strain OhILAs)).